The primary structure comprises 788 residues: DNA ligase (788 aa).

NAD(+) contacts are provided by residues 35-39 (DAEYD), 84-85 (SL), and Glu124. The N6-AMP-lysine intermediate role is filled by Lys126. Arg147, Glu184, Lys300, and Lys324 together coordinate NAD(+). Positions 418, 421, 448, and 454 each coordinate Zn(2+). The region spanning 707 to 788 (AEGLPLAGQT…FIERLAQLGS (82 aa)) is the BRCT domain.

It belongs to the NAD-dependent DNA ligase family. LigA subfamily. It depends on Mg(2+) as a cofactor. Mn(2+) is required as a cofactor.

The enzyme catalyses NAD(+) + (deoxyribonucleotide)n-3'-hydroxyl + 5'-phospho-(deoxyribonucleotide)m = (deoxyribonucleotide)n+m + AMP + beta-nicotinamide D-nucleotide.. DNA ligase that catalyzes the formation of phosphodiester linkages between 5'-phosphoryl and 3'-hydroxyl groups in double-stranded DNA using NAD as a coenzyme and as the energy source for the reaction. It is essential for DNA replication and repair of damaged DNA. This is DNA ligase from Stutzerimonas stutzeri (strain A1501) (Pseudomonas stutzeri).